The sequence spans 252 residues: Small ribosomal subunit protein uS2A (252 aa).

Position 2 is an N-acetylserine (serine 2). Residues 209 to 252 (EVEQQAAEETTSTGADAEESKEEVAEGQNEASEWAEENTEAVSW) form a disordered region. Residues 241 to 252 (EWAEENTEAVSW) show a composition bias toward acidic residues.

This sequence belongs to the universal ribosomal protein uS2 family. Component of the small ribosomal subunit. Mature ribosomes consist of a small (40S) and a large (60S) subunit. The 40S subunit contains about 33 different proteins and 1 molecule of RNA (18S). The 60S subunit contains about 49 different proteins and 3 molecules of RNA (25S, 5.8S and 5S). Interacts with RPS21.

The protein resides in the cytoplasm. Functionally, required for the assembly and/or stability of the 40S ribosomal subunit. Required for the processing of the 20S rRNA-precursor to mature 18S rRNA in a late step of the maturation of 40S ribosomal subunits. The polypeptide is Small ribosomal subunit protein uS2A (Vanderwaltozyma polyspora (strain ATCC 22028 / DSM 70294 / BCRC 21397 / CBS 2163 / NBRC 10782 / NRRL Y-8283 / UCD 57-17) (Kluyveromyces polysporus)).